An 84-amino-acid polypeptide reads, in one-letter code: Small ribosomal subunit protein bS18B (84 aa).

Residues 1–10 (MAVKRAPSKK) show a composition bias toward basic residues. The tract at residues 1–20 (MAVKRAPSKKVRAEQARRPK) is disordered.

Belongs to the bacterial ribosomal protein bS18 family. Part of the 30S ribosomal subunit. Forms a tight heterodimer with protein bS6.

Its function is as follows. Binds as a heterodimer with protein bS6 to the central domain of the 16S rRNA, where it helps stabilize the platform of the 30S subunit. The polypeptide is Small ribosomal subunit protein bS18B (Nocardia farcinica (strain IFM 10152)).